Consider the following 2483-residue polypeptide: Cation-independent mannose-6-phosphate receptor (2483 aa).

An N-terminal signal peptide occupies residues 1 to 35 (MRAVQLGPVPSGPRVALLPPLLLLLLLAAAGSAQA). The Lumenal portion of the chain corresponds to 36–2295 (QAVDLDALCS…YKGLSERSQA (2260 aa)). MRH domains lie at 42–158 (ALCS…ACKK), 167–315 (VPCY…ACHR), 321–463 (ESCS…ACIK), 468–613 (LLCG…ACVL), 619–755 (ENCT…ACPE), 758–917 (LECM…ACPI), 925–1072 (QACS…ACTP), 1075–1212 (VDCQ…ACPV), and 1218–1356 (DNCQ…ACPP). Intrachain disulfides connect Cys44-Cys64 and Cys72-Cys79. Residue Asn107 is glycosylated (N-linked (GlcNAc...) asparagine). Intrachain disulfides connect Cys112–Cys144, Cys129–Cys156, Cys169–Cys207, Cys223–Cys230, Cys270–Cys301, Cys283–Cys313, Cys323–Cys361, and Cys369–Cys377. N-linked (GlcNAc...) asparagine glycosylation is found at Asn395 and Asn430. Intrachain disulfides connect Cys415-Cys449, Cys429-Cys461, Cys470-Cys513, and Cys525-Cys532. N-linked (GlcNAc...) asparagine glycosylation is found at Asn537 and Asn575. Intrachain disulfides connect Cys566/Cys599 and Cys580/Cys611. Asn620 carries N-linked (GlcNAc...) asparagine glycosylation. 5 disulfide bridges follow: Cys621/Cys658, Cys666/Cys673, Cys724/Cys753, Cys760/Cys807, and Cys816/Cys823. N-linked (GlcNAc...) asparagine glycosylation occurs at Asn740. Asn864 carries N-linked (GlcNAc...) asparagine glycosylation. 7 cysteine pairs are disulfide-bonded: Cys868/Cys903, Cys886/Cys915, Cys927/Cys964, Cys970/Cys981, Cys1035/Cys1070, Cys1077/Cys1118, and Cys1127/Cys1135. Asn944 carries an N-linked (GlcNAc...) asparagine glycan. N-linked (GlcNAc...) asparagine glycosylation is present at Asn1157. Disulfide bonds link Cys1170–Cys1198, Cys1183–Cys1210, Cys1220–Cys1255, and Cys1263–Cys1275. The N-linked (GlcNAc...) asparagine glycan is linked to Asn1239. Asn1305 carries N-linked (GlcNAc...) asparagine glycosylation. 2 disulfide bridges follow: Cys1312/Cys1342 and Cys1326/Cys1354. Residue Asn1358 is glycosylated (N-linked (GlcNAc...) asparagine). MRH domains lie at 1360 to 1501 (TECS…ACPV), 1507 to 1641 (DDCQ…ACEQ), 1643 to 1790 (TECT…VCPD), 1795 to 1982 (QGCA…VCPP), 1985 to 2120 (MECK…ACAV), and 2128 to 2273 (VNGT…VCPL). Intrachain disulfides connect Cys1362–Cys1401 and Cys1413–Cys1420. A glycan (N-linked (GlcNAc...) asparagine) is linked at Asn1423. Disulfide bonds link Cys1454/Cys1487, Cys1469/Cys1499, Cys1509/Cys1546, Cys1552/Cys1559, Cys1591/Cys1627, Cys1607/Cys1639, Cys1645/Cys1688, Cys1699/Cys1706, Cys1743/Cys1776, Cys1759/Cys1788, Cys1797/Cys1832, Cys1843/Cys1849, Cys1886/Cys1968, Cys1896/Cys1920, Cys1910/Cys1935, Cys1950/Cys1980, Cys1987/Cys2022, Cys2032/Cys2039, Cys2075/Cys2106, and Cys2089/Cys2118. N-linked (GlcNAc...) asparagine glycosylation occurs at Asn1532. The N-linked (GlcNAc...) asparagine glycan is linked to Asn1649. An N-linked (GlcNAc...) asparagine glycan is attached at Asn1750. Asn1809 is a glycosylation site (N-linked (GlcNAc...) asparagine). One can recognise a Fibronectin type-II domain in the interval 1891-1937 (DDGEPCVFPFIYKGKSYDECVLEGRAKLWCSKTANYDRDHEWGFCRQ). The N-linked (GlcNAc...) asparagine glycan is linked to Asn2078. The N-linked (GlcNAc...) asparagine glycan is linked to Asn2129. 3 disulfide bridges follow: Cys2181/Cys2187, Cys2225/Cys2259, and Cys2241/Cys2271. A helical membrane pass occupies residues 2296–2316 (VGAVLSLLLVALTGCLLALLL). At 2317 to 2483 (HKKERRETVI…DDSDEDLLHI (167 aa)) the chain is on the cytoplasmic side. Lys2342 carries the post-translational modification N6-acetyllysine. Ser2401 carries the phosphoserine modification. The tract at residues 2415–2483 (SGRGAEVESS…DDSDEDLLHI (69 aa)) is disordered. An Omega-N-methylarginine modification is found at Arg2417. 2 stretches are compositionally biased toward basic and acidic residues: residues 2434–2451 (VLKE…GEKA) and 2471–2483 (SFHD…LLHI). Ser2471 and Ser2476 each carry phosphoserine.

The protein belongs to the MRL1/IGF2R family. Binds HA-I and HA-II plasma membrane adapters. Interacts with DPP4; the interaction is direct. Binds GGA1, GGA2 and GGA3. Interacts with the heterotrimeric retromer cargo-selective complex (CSC), formed by VPS26 (VPS26A or VPS26B), VPS29 and VPS35; which is involved in retrograde trafficking of the receptor from endosomes to the Golgi apparatus. In terms of processing, palmitoylated. Undergoes cysteine S-palmitoylation which promotes interaction with the retromer cargo-selective complex which mediates its retrograde trafficking to the Golgi apparatus.

The protein resides in the golgi apparatus membrane. It localises to the endosome membrane. In terms of biological role, mediates the transport of phosphorylated lysosomal enzymes from the Golgi complex and the cell surface to lysosomes. Lysosomal enzymes bearing phosphomannosyl residues bind specifically to mannose-6-phosphate receptors in the Golgi apparatus and the resulting receptor-ligand complex is transported to an acidic prelysosomal compartment where the low pH mediates the dissociation of the complex. The receptor is then recycled back to the Golgi for another round of trafficking through its binding to the retromer. This receptor also binds IGF2. Acts as a positive regulator of T-cell coactivation by binding DPP4. This is Cation-independent mannose-6-phosphate receptor (Igf2r) from Mus musculus (Mouse).